The chain runs to 134 residues: Histone H2B (134 aa).

Positions 1-10 are enriched in polar residues; sequence MSDKASTPKK. 2 disordered regions span residues 1–29 and 113–134; these read MSDK…EAKK and VSEG…SKSR. Residues 12–29 show a composition bias toward basic and acidic residues; that stretch reads ATKDATKPKKVGDEEAKK. Residues 125-134 are compositionally biased toward polar residues; sequence GQPTSGSKSR.

The protein belongs to the histone H2B family. The nucleosome is a histone octamer containing two molecules each of H2A, H2B, H3 and H4 assembled in one H3-H4 heterotetramer and two H2A-H2B heterodimers. The octamer wraps approximately 147 bp of DNA.

It is found in the nucleus. The protein localises to the chromosome. In terms of biological role, core component of nucleosome. Nucleosomes wrap and compact DNA into chromatin, limiting DNA accessibility to the cellular machineries which require DNA as a template. Histones thereby play a central role in transcription regulation, DNA repair, DNA replication and chromosomal stability. DNA accessibility is regulated via a complex set of post-translational modifications of histones, also called histone code, and nucleosome remodeling. The sequence is that of Histone H2B from Entamoeba invadens.